The sequence spans 549 residues: ATP synthase subunit alpha (549 aa).

172-179 serves as a coordination point for ATP; the sequence is GDRKTGKT.

It belongs to the ATPase alpha/beta chains family. As to quaternary structure, F-type ATPases have 2 components, CF(1) - the catalytic core - and CF(0) - the membrane proton channel. CF(1) has five subunits: alpha(3), beta(3), gamma(1), delta(1), epsilon(1). CF(0) has three main subunits: a(1), b(2) and c(9-12). The alpha and beta chains form an alternating ring which encloses part of the gamma chain. CF(1) is attached to CF(0) by a central stalk formed by the gamma and epsilon chains, while a peripheral stalk is formed by the delta and b chains.

The protein resides in the cell membrane. It carries out the reaction ATP + H2O + 4 H(+)(in) = ADP + phosphate + 5 H(+)(out). In terms of biological role, produces ATP from ADP in the presence of a proton gradient across the membrane. The alpha chain is a regulatory subunit. This chain is ATP synthase subunit alpha, found in Mycobacterium tuberculosis (strain CDC 1551 / Oshkosh).